A 266-amino-acid chain; its full sequence is Ankyrin repeat domain-containing protein 45 (266 aa).

Acidic residues-rich tracts occupy residues 1 to 11 (MESEGPPESES) and 18 to 32 (QEEENEEEEAQEPEE). The segment at 1 to 43 (MESEGPPESESSEFFSQQEEENEEEEAQEPEETGPKNPLLQPA) is disordered. 2 ANK repeats span residues 76–105 (VGRNLLYAACMAGQSDVIRALAKYGVNLNE) and 109–138 (RGYTLLHCAAAWGRLETLKALVELDVDIEA).

It is found in the cytoplasm. The protein resides in the midbody. It localises to the midbody ring. The protein localises to the cleavage furrow. In terms of biological role, may play a role during cell division. This is Ankyrin repeat domain-containing protein 45 from Homo sapiens (Human).